The sequence spans 235 residues: Phosphoribosylaminoimidazole-succinocarboxamide synthase (235 aa).

The protein belongs to the SAICAR synthetase family.

The enzyme catalyses 5-amino-1-(5-phospho-D-ribosyl)imidazole-4-carboxylate + L-aspartate + ATP = (2S)-2-[5-amino-1-(5-phospho-beta-D-ribosyl)imidazole-4-carboxamido]succinate + ADP + phosphate + 2 H(+). It participates in purine metabolism; IMP biosynthesis via de novo pathway; 5-amino-1-(5-phospho-D-ribosyl)imidazole-4-carboxamide from 5-amino-1-(5-phospho-D-ribosyl)imidazole-4-carboxylate: step 1/2. The polypeptide is Phosphoribosylaminoimidazole-succinocarboxamide synthase (Streptococcus pneumoniae (strain 70585)).